The primary structure comprises 448 residues: Amino-acid acetyltransferase (448 aa).

Residues 295–433 (EQIRRANIND…KQVLYNYQRR (139 aa)) enclose the N-acetyltransferase domain.

The protein belongs to the acetyltransferase family. ArgA subfamily. Homohexamer.

Its subcellular location is the cytoplasm. The catalysed reaction is L-glutamate + acetyl-CoA = N-acetyl-L-glutamate + CoA + H(+). It participates in amino-acid biosynthesis; L-arginine biosynthesis; N(2)-acetyl-L-ornithine from L-glutamate: step 1/4. This chain is Amino-acid acetyltransferase, found in Photorhabdus laumondii subsp. laumondii (strain DSM 15139 / CIP 105565 / TT01) (Photorhabdus luminescens subsp. laumondii).